A 507-amino-acid chain; its full sequence is ATP synthase subunit alpha, chloroplastic (507 aa).

170–177 (IGDRQTGK) lines the ATP pocket.

This sequence belongs to the ATPase alpha/beta chains family. F-type ATPases have 2 components, CF(1) - the catalytic core - and CF(0) - the membrane proton channel. CF(1) has five subunits: alpha(3), beta(3), gamma(1), delta(1), epsilon(1). CF(0) has four main subunits: a, b, b' and c.

The protein localises to the plastid. It is found in the chloroplast thylakoid membrane. The enzyme catalyses ATP + H2O + 4 H(+)(in) = ADP + phosphate + 5 H(+)(out). Functionally, produces ATP from ADP in the presence of a proton gradient across the membrane. The alpha chain is a regulatory subunit. The chain is ATP synthase subunit alpha, chloroplastic from Adiantum capillus-veneris (Maidenhair fern).